Reading from the N-terminus, the 910-residue chain is von Willebrand factor A domain-containing protein DDB_G0292740 (910 aa).

Positions 63–194 (AYQYYNVSSF…SITIHITMIS (132 aa)) constitute a VIT domain. The tract at residues 297-318 (IKNNPHSDSDSDSDDEENKKEN) is disordered. The VWFA domain occupies 346–515 (EFIFLIDCSG…DMETEVMKLL (170 aa)). Over residues 703 to 719 (QYQQQQQQQQQNFNSGF) the composition is skewed to low complexity. The segment at 703–815 (QYQQQQQQQQ…TQSESTPSND (113 aa)) is disordered. A compositionally biased stretch (pro residues) spans 720–749 (APPPPPMMSSGPPPPPGSSFGAPPPPPPGG). Low complexity predominate over residues 750-802 (AFPTSSISEKKSSSQSSSSYLPPTMSLSRKSSLSPSSPSKNYPSPKLSSPSLS). Residues 803–815 (YGSTQSESTPSND) are compositionally biased toward polar residues.

In Dictyostelium discoideum (Social amoeba), this protein is von Willebrand factor A domain-containing protein DDB_G0292740.